The sequence spans 478 residues: MKLFPLCLSALVMSTATCASSVEGAIEKVPQSLEQKGPSEMLSMKPDVKGGFGDRMMFIPFQSDLGLHSPVDRSGFEYCGYLDAIESEDGDSSRAPYAKLQLKENVEGIARFGLFYHPSPFQAFKHIIDNGGKYSGLDRVFLENLRKSLVVSLDSAVNRTYSIPVEDEGFYCFVGYQEVAHQETVIGENSEPIVTIEFDSFNSNVPVTLKLQRQIFLSFSIVYGLISLWWAIRCICSRTKLHLVQVCLFCWFSFFILNHPVKQRIFSIDNPDEYLVPFVVSCFTYFLGDGIEYALYSLFITTTVLGFGTIRRTSKKMVLFFSLLTCGQAFLVNVAPMVYPLLYISGSDKACVLRMVWVFNKFLYLPLITFLGAVLAFRFRLKKASQFDTRWNLFALTLAIIILFAFNDLVIFDKLQKLWKYDDTTLEYLKIVNGGIKFVAFSILLGPYSKLFAEPKSLQLDDFLGKHDGHKDPSLEKF.

A signal peptide spans 1 to 19 (MKLFPLCLSALVMSTATCA). Residues 20-214 (SSVEGAIEKV…VPVTLKLQRQ (195 aa)) are Lumenal-facing. Residues 215-235 (IFLSFSIVYGLISLWWAIRCI) form a helical membrane-spanning segment. The Cytoplasmic segment spans residues 236 to 240 (CSRTK). The helical transmembrane segment at 241–261 (LHLVQVCLFCWFSFFILNHPV) threads the bilayer. Residues 262-289 (KQRIFSIDNPDEYLVPFVVSCFTYFLGD) lie on the Lumenal side of the membrane. Residues 290 to 310 (GIEYALYSLFITTTVLGFGTI) form a helical membrane-spanning segment. The Cytoplasmic portion of the chain corresponds to 311 to 317 (RRTSKKM). The helical transmembrane segment at 318 to 338 (VLFFSLLTCGQAFLVNVAPMV) threads the bilayer. The Lumenal segment spans residues 339-356 (YPLLYISGSDKACVLRMV). Residues 357–377 (WVFNKFLYLPLITFLGAVLAF) form a helical membrane-spanning segment. Residues 378–391 (RFRLKKASQFDTRW) are Cytoplasmic-facing. Residues 392–412 (NLFALTLAIIILFAFNDLVIF) form a helical membrane-spanning segment. Topologically, residues 413–427 (DKLQKLWKYDDTTLE) are lumenal. A helical membrane pass occupies residues 428-448 (YLKIVNGGIKFVAFSILLGPY). The Cytoplasmic segment spans residues 449–478 (SKLFAEPKSLQLDDFLGKHDGHKDPSLEKF).

The protein resides in the endoplasmic reticulum membrane. It is found in the golgi apparatus membrane. This is an uncharacterized protein from Schizosaccharomyces pombe (strain 972 / ATCC 24843) (Fission yeast).